A 963-amino-acid chain; its full sequence is Kinesin-1 heavy chain (963 aa).

An N-acetylalanine modification is found at Ala2. A Kinesin motor domain is found at 8–325 (NIKVMCRFRP…LLFGQRAKTI (318 aa)). 85–92 (GQTSSGKT) is an ATP binding site. Lys213 is covalently cross-linked (Glycyl lysine isopeptide (Lys-Gly) (interchain with G-Cter in SUMO2)). Residues 330–913 (CVNVELTAEQ…EAVRSKNMAR (584 aa)) are a coiled coil. A disordered region spans residues 908-963 (SKNMARRGHSAQIAKPIRPGQHPAASPTHPGAVRGGGSFVQNNQPVGLRGGGGKQA). Residues 915-963 (GHSAQIAKPIRPGQHPAASPTHPGAVRGGGSFVQNNQPVGLRGGGGKQA) are globular. Phosphoserine occurs at positions 933 and 945. Residue Arg956 is modified to Omega-N-methylarginine.

It belongs to the TRAFAC class myosin-kinesin ATPase superfamily. Kinesin family. Kinesin subfamily. As to quaternary structure, oligomer composed of two heavy chains and two light chains. Interacts with GRIP1 and PPP1R42. Interacts with SYBU. Interacts with JAKMIP1. Interacts with PLEKHM2. Interacts with ECPAS. Interacts with ZFYVE27. Found in a complex with OGT, RHOT1, RHOT2 and TRAK1. Interacts with APP (via cytoplasmic domain). Expressed in the brain (at protein level). Expressed in the brain, liver, kidney, spleen, heart, lung and sciatic nerve.

The protein localises to the cytoplasm. The protein resides in the cytoskeleton. Its subcellular location is the cytolytic granule membrane. It is found in the lysosome membrane. Functionally, microtubule-dependent motor required for normal distribution of mitochondria and lysosomes. Can induce formation of neurite-like membrane protrusions in non-neuronal cells in a ZFYVE27-dependent manner. Regulates centrosome and nuclear positioning during mitotic entry. During the G2 phase of the cell cycle in a BICD2-dependent manner, antagonizes dynein function and drives the separation of nuclei and centrosomes. Required for anterograde axonal transportation of MAPK8IP3/JIP3 which is essential for MAPK8IP3/JIP3 function in axon elongation. Through binding with PLEKHM2 and ARL8B, directs lysosome movement toward microtubule plus ends. Involved in NK cell-mediated cytotoxicity. Drives the polarization of cytolytic granules and microtubule-organizing centers (MTOCs) toward the immune synapse between effector NK lymphocytes and target cells. The sequence is that of Kinesin-1 heavy chain from Rattus norvegicus (Rat).